An 82-amino-acid chain; its full sequence is Acyl carrier protein (82 aa).

The region spanning 4 to 79 (EKIFQELKNI…DVVDIIESNL (76 aa)) is the Carrier domain. Ser-39 carries the post-translational modification O-(pantetheine 4'-phosphoryl)serine.

The protein belongs to the acyl carrier protein (ACP) family. Post-translationally, 4'-phosphopantetheine is transferred from CoA to a specific serine of apo-ACP by AcpS. This modification is essential for activity because fatty acids are bound in thioester linkage to the sulfhydryl of the prosthetic group.

The protein resides in the cytoplasm. It functions in the pathway lipid metabolism; fatty acid biosynthesis. In terms of biological role, carrier of the growing fatty acid chain in fatty acid biosynthesis. This chain is Acyl carrier protein, found in Coprothermobacter proteolyticus (strain ATCC 35245 / DSM 5265 / OCM 4 / BT).